Reading from the N-terminus, the 354-residue chain is Replication-associated protein (354 aa).

Residues 11 to 114 enclose the CRESS-DNA virus Rep endonuclease domain; sequence SHRSPNTFLT…PLALFERGTF (104 aa). An RCR-1 motif is present at residues 18–21; sequence FLTY. The a divalent metal cation site is built by glutamate 52 and histidine 62. Residues 60 to 65 carry the RCR-2 motif; the sequence is CLHALI. Tyrosine 100 acts as the For DNA cleavage activity in catalysis. Residues 100 to 103 carry the RCR-3 motif; the sequence is YITK. Residue glutamate 104 coordinates a divalent metal cation. The oligomerization stretch occupies residues 175–187; that stretch reads SANKLFPDIQEEF. Residue 228–235 coordinates ATP; sequence GPTRTGKS. The tract at residues 251–269 is transactivation; that stretch reads VDWSSYNEDTIYNIVDDIP. Positions 291–302 match the Nuclear localization signal motif; sequence KYGKKKKVQMKS.

It belongs to the geminiviridae Rep protein family. In terms of assembly, homooligomer. Rep binds to repeated DNA motifs (iterons). Forms the O-complex, which is a Rep-DNA complex involved in the initiation of RCR. Part of the C- and V-complexes which are RepA-Rep-DNA complexes involved in the c-sense and v-sense transcription. Mg(2+) is required as a cofactor. It depends on Mn(2+) as a cofactor.

It is found in the host nucleus. Its function is as follows. Essential for the replication of viral ssDNA. The closed circular ssDNA genome is first converted to a superhelical dsDNA. Rep binds a specific region at the genome origin of replication. It introduces an endonucleolytic nick within the conserved sequence 5'-TAATATTAC-3' in the intergenic region of the genome present in all geminiviruses, thereby initiating the rolling circle replication (RCR). Following cleavage, binds covalently to the 5'-phosphate of DNA as a tyrosyl ester. The cleavage gives rise to a free 3'-OH that serves as a primer for the cellular DNA polymerase. The polymerase synthesizes the (+) strand DNA by rolling circle mechanism. After one round of replication, a Rep-catalyzed nucleotidyl transfer reaction releases a circular single-stranded virus genome, thereby terminating the replication. Displays origin-specific DNA cleavage, nucleotidyl transferase, ATPase and helicase activities. Acts as an inhibitor of C-sense gene transcription. The protein is Replication-associated protein of Maize streak virus genotype C (isolate Set) (MSV).